The following is an 86-amino-acid chain: Small ribosomal subunit protein bS20 (86 aa).

Basic residues predominate over residues 1–11 (MANIKQQKKRN). The tract at residues 1 to 21 (MANIKQQKKRNKTNEKRRLQN) is disordered.

The protein belongs to the bacterial ribosomal protein bS20 family.

In terms of biological role, binds directly to 16S ribosomal RNA. This is Small ribosomal subunit protein bS20 from Onion yellows phytoplasma (strain OY-M).